The following is a 597-amino-acid chain: Dictomallein-3 (597 aa).

A signal peptide spans 1–19 (MKLILILIFLFSCILFINC). In terms of domain architecture, Peptidase M66 spans 148–409 (PDVGQDYTLK…QNYFKNSIYY (262 aa)). Zn(2+) is bound at residue His-301. The active site involves Glu-302. Residues His-305 and His-311 each coordinate Zn(2+).

The protein belongs to the dictomallein family. It depends on Zn(2+) as a cofactor.

The protein resides in the secreted. This chain is Dictomallein-3 (dtmlC), found in Dictyostelium discoideum (Social amoeba).